We begin with the raw amino-acid sequence, 211 residues long: Large ribosomal subunit protein bL25 (211 aa).

Belongs to the bacterial ribosomal protein bL25 family. CTC subfamily. Part of the 50S ribosomal subunit; part of the 5S rRNA/L5/L18/L25 subcomplex. Contacts the 5S rRNA. Binds to the 5S rRNA independently of L5 and L18.

Its function is as follows. This is one of the proteins that binds to the 5S RNA in the ribosome where it forms part of the central protuberance. The sequence is that of Large ribosomal subunit protein bL25 from Anaplasma phagocytophilum (strain HZ).